The primary structure comprises 141 residues: Small ribosomal subunit protein uS12 (141 aa).

A 3-methylthioaspartic acid modification is found at D102. Residues 115–141 are disordered; the sequence is GDASGVEKRRQQRSLYGAKRPKKEASK.

Belongs to the universal ribosomal protein uS12 family. Part of the 30S ribosomal subunit. Contacts proteins S8 and S17. May interact with IF1 in the 30S initiation complex.

With S4 and S5 plays an important role in translational accuracy. Functionally, interacts with and stabilizes bases of the 16S rRNA that are involved in tRNA selection in the A site and with the mRNA backbone. Located at the interface of the 30S and 50S subunits, it traverses the body of the 30S subunit contacting proteins on the other side and probably holding the rRNA structure together. The combined cluster of proteins S8, S12 and S17 appears to hold together the shoulder and platform of the 30S subunit. The sequence is that of Small ribosomal subunit protein uS12 from Ureaplasma parvum serovar 3 (strain ATCC 27815 / 27 / NCTC 11736).